We begin with the raw amino-acid sequence, 43 residues long: Photosystem I reaction center subunit IX (43 aa).

A helical membrane pass occupies residues 7–27 (YLSVAPVLSALWFGALAGLLI).

The protein belongs to the PsaJ family.

It localises to the plastid. It is found in the chloroplast thylakoid membrane. Its function is as follows. May help in the organization of the PsaE and PsaF subunits. The chain is Photosystem I reaction center subunit IX from Oenothera argillicola (Appalachian evening primrose).